The primary structure comprises 374 residues: Ribosomal RNA large subunit methyltransferase G (374 aa).

It belongs to the methyltransferase superfamily. RlmG family.

It localises to the cytoplasm. It catalyses the reaction guanosine(1835) in 23S rRNA + S-adenosyl-L-methionine = N(2)-methylguanosine(1835) in 23S rRNA + S-adenosyl-L-homocysteine + H(+). Its function is as follows. Specifically methylates the guanine in position 1835 (m2G1835) of 23S rRNA. The polypeptide is Ribosomal RNA large subunit methyltransferase G (Ectopseudomonas mendocina (strain ymp) (Pseudomonas mendocina)).